The primary structure comprises 168 residues: Ribosome maturation factor RimP (168 aa).

It belongs to the RimP family.

The protein localises to the cytoplasm. In terms of biological role, required for maturation of 30S ribosomal subunits. This chain is Ribosome maturation factor RimP, found in Bordetella parapertussis (strain 12822 / ATCC BAA-587 / NCTC 13253).